Reading from the N-terminus, the 192-residue chain is Adenylate kinase (192 aa).

10–18 (GVPGVGGTT) serves as a coordination point for ATP.

This sequence belongs to the archaeal adenylate kinase family. As to quaternary structure, monomer.

Its subcellular location is the cytoplasm. It carries out the reaction AMP + ATP = 2 ADP. In Methanococcus maripaludis (strain C5 / ATCC BAA-1333), this protein is Adenylate kinase.